The primary structure comprises 103 residues: SLC35A4 upstream open reading frame protein (103 aa).

The chain crosses the membrane as a helical span at residues 62–84 (ASAVLGFAVGTCTGIYAAQAYAV).

It localises to the mitochondrion inner membrane. Required to maintain cellular respiration. This is SLC35A4 upstream open reading frame protein from Homo sapiens (Human).